A 177-amino-acid polypeptide reads, in one-letter code: Thioredoxin M-type, chloroplastic (177 aa).

A chloroplast-targeting transit peptide spans 1 to 64 (MAAFTCTSSP…SRLRRGGIIC (64 aa)). The Thioredoxin domain occupies 65-177 (EAQDTATGIP…LATSIDKFLQ (113 aa)). Residues Cys101 and Cys104 each act as nucleophile in the active site. A disulfide bond links Cys101 and Cys104.

The protein belongs to the thioredoxin family. Plant M-type subfamily. Forms a complex with heterodimeric ferredoxin-thioredoxin reductase (FTR) and ferredoxin.

It is found in the plastid. The protein resides in the chloroplast. Functionally, participates in various redox reactions through the reversible oxidation of the active center dithiol to a disulfide. The M form is known to activate NADP-malate dehydrogenase. In Brassica napus (Rape), this protein is Thioredoxin M-type, chloroplastic.